Consider the following 290-residue polypeptide: uncharacterized protein (290 aa).

The signal sequence occupies residues 1–25 (MNKKSILSKTSLGSLFFLFGTALSA). Cys-26 carries the N-palmitoyl cysteine lipid modification. Cys-26 is lipidated: S-diacylglycerol cysteine. Residues 183–203 (GTDSKGSGSNNQNGGVTEKDF) form a disordered region. Positions 186–197 (SKGSGSNNQNGG) are enriched in low complexity.

It belongs to the MG439/MG440 family.

The protein resides in the cell membrane. This is an uncharacterized protein from Mycoplasma pneumoniae (strain ATCC 29342 / M129 / Subtype 1) (Mycoplasmoides pneumoniae).